The primary structure comprises 79 residues: Sulfur carrier protein TusA (79 aa).

Catalysis depends on C17, which acts as the Cysteine persulfide intermediate.

This sequence belongs to the sulfur carrier protein TusA family.

It localises to the cytoplasm. Functionally, sulfur carrier protein which probably makes part of a sulfur-relay system. This is Sulfur carrier protein TusA from Haemophilus influenzae (strain ATCC 51907 / DSM 11121 / KW20 / Rd).